We begin with the raw amino-acid sequence, 384 residues long: Prostaglandin E synthase 2 (384 aa).

Residues 1–56 (MAQAARLSWVLVSSRCALTEGLLTRPWQPLSAQSRAGFTRVAAGSRGAAVRKGSPR) are Lumenal-facing. Residues 57-73 (LLGAAALALGGALGLYH) form a helical membrane-spanning segment. Topologically, residues 74 to 384 (TVRWHQRSQD…VHHVNPSCKD (311 aa)) are cytoplasmic. A Glutaredoxin domain is found at 89–192 (SAAQLPLSNS…EVITYYPPMK (104 aa)). Glutathione contacts are provided by residues V147 and 163 to 164 (DS). Positions 262–376 (YIVREGKFGA…RAIEEAPSVH (115 aa)) constitute a GST C-terminal domain.

The protein belongs to the GST superfamily. As to quaternary structure, homodimer. Interacts with EXOSC10. May interact with CEBPB. In terms of processing, synthesized as a Golgi membrane-associated protein, and the proteolytic removal of the N-terminal hydrophobic domain leads to the formation of a mature cytosolic enzyme. As to expression, widely expressed. Expressed in brain, heart, liver, colon and lung.

It is found in the golgi apparatus membrane. The protein localises to the nucleus. It localises to the cytoplasm. The catalysed reaction is prostaglandin H2 = prostaglandin E2. The enzyme catalyses prostaglandin H2 = (12S)-hydroxy-(5Z,8E,10E)-heptadecatrienoate + malonaldehyde. The protein operates within lipid metabolism; prostaglandin biosynthesis. Isomerase activity is increased by sulfhydril compounds. Dithiothreitol (DTT) is most effective, followed by glutathione (GSH) and 2-mercaptoethanol. In terms of biological role, isomerase that catalyzes the conversion of PGH2 into the more stable prostaglandin E2 (PGE2) (in vitro). The biological function and the GSH-dependent property of PTGES2 is still under debate. In vivo, PTGES2 could form a complex with GSH and heme and would not participate in PGE2 synthesis but would catalyze the degradation of prostaglandin E2 H2 (PGH2) to 12(S)-hydroxy-5(Z),8(E),10(E)-heptadecatrienoic acid (HHT) and malondialdehyde (MDA). May also have transactivation activity toward IFN-gamma (IFNG), possibly via an interaction with CEBPB; however, the relevance of transcription activation activity remains unclear. The chain is Prostaglandin E synthase 2 (Ptges2) from Mus musculus (Mouse).